The primary structure comprises 577 residues: Arginine--tRNA ligase (577 aa).

Positions 123 to 133 match the 'HIGH' region motif; that stretch reads PNLAKEMHVGH.

The protein belongs to the class-I aminoacyl-tRNA synthetase family. In terms of assembly, monomer.

The protein localises to the cytoplasm. It carries out the reaction tRNA(Arg) + L-arginine + ATP = L-arginyl-tRNA(Arg) + AMP + diphosphate. In Marinomonas sp. (strain MWYL1), this protein is Arginine--tRNA ligase.